The following is a 37-amino-acid chain: Photosystem I reaction center subunit VIII (37 aa).

A helical membrane pass occupies residues 9-29 (SILVTLVGLVFPAFAMASLFL).

The protein belongs to the PsaI family.

It is found in the plastid. The protein resides in the chloroplast thylakoid membrane. Functionally, may help in the organization of the PsaL subunit. The sequence is that of Photosystem I reaction center subunit VIII from Pelargonium hortorum (Common geranium).